A 2368-amino-acid chain; its full sequence is Highly reducing polyketide synthase cla2 (2368 aa).

A Ketosynthase family 3 (KS3) domain is found at 10–434 (QIPIAIVGLG…GTNGLVVLEA (425 aa)). Catalysis depends on for beta-ketoacyl synthase activity residues Cys182, His317, and His357. The segment at 548 to 877 (FVFTGQGAQW…RGQNALDTSL (330 aa)) is malonyl-CoA:ACP transacylase (MAT) domain. The active-site For malonyltransferase activity is the Ser638. The segment at 936–1071 (HSMIGLKQPM…GLVAIEYTNK (136 aa)) is N-terminal hotdog fold. The tract at residues 936–1175 (HSMIGLKQPM…AIFQSIFGST (240 aa)) is dehydratase (DH) domain. Residues 936–1255 (HSMIGLKQPM…MTEPEVGDDA (320 aa)) enclose the PKS/mFAS DH domain. The Proton acceptor; for dehydratase activity role is filled by His968. The tract at residues 1099-1255 (PLMIRREKFY…MTEPEVGDDA (157 aa)) is C-terminal hotdog fold. The Proton donor; for dehydratase activity role is filled by Asp1165. Positions 1655–1967 (GFLDSLQFIK…QGKHRGKLVL (313 aa)) are enoylreductase (ER) domain. The interval 1991–2170 (ATYLIIGGLG…AVAVNLTIIR (180 aa)) is catalytic ketoreductase (KRc) domain. In terms of domain architecture, Carrier spans 2283 to 2360 (QASEIITEGL…VLAKTIASRS (78 aa)). The residue at position 2320 (Ser2320) is an O-(pantetheine 4'-phosphoryl)serine.

It participates in secondary metabolite biosynthesis. Its function is as follows. Highly reducing polyketide synthase; part of the gene cluster that mediates the biosynthesis of cladosporin, a tricyclic octaketide that acts as an antimalarial agent though inhibition of the Plasmodium falciparum lysyl-tRNA synthetase. The highly reducing polyketide synthase cla2 is responsible for biosynthesis up to the pentaketide stage, including of the tetrahydropyran (THP) ring, whereas the three subsequent ketide extensions with no reduction are catalyzed by the non-reducing polyketide synthase cla3. The protein is Highly reducing polyketide synthase cla2 of Cladosporium cladosporioides.